The chain runs to 74 residues: Exodeoxyribonuclease 7 small subunit (74 aa).

Belongs to the XseB family. Heterooligomer composed of large and small subunits.

The protein localises to the cytoplasm. The enzyme catalyses Exonucleolytic cleavage in either 5'- to 3'- or 3'- to 5'-direction to yield nucleoside 5'-phosphates.. Its function is as follows. Bidirectionally degrades single-stranded DNA into large acid-insoluble oligonucleotides, which are then degraded further into small acid-soluble oligonucleotides. The sequence is that of Exodeoxyribonuclease 7 small subunit from Clostridium botulinum (strain Eklund 17B / Type B).